Reading from the N-terminus, the 514-residue chain is 2,3-bisphosphoglycerate-independent phosphoglycerate mutase (514 aa).

The Mn(2+) site is built by D14 and S64. S64 acts as the Phosphoserine intermediate in catalysis. Substrate is bound by residues H125, 155–156 (RD), R187, R193, 263–266 (RADR), and K336. 5 residues coordinate Mn(2+): D403, H407, D444, H445, and H463.

Belongs to the BPG-independent phosphoglycerate mutase family. Monomer. Mn(2+) is required as a cofactor.

It catalyses the reaction (2R)-2-phosphoglycerate = (2R)-3-phosphoglycerate. The protein operates within carbohydrate degradation; glycolysis; pyruvate from D-glyceraldehyde 3-phosphate: step 3/5. Functionally, catalyzes the interconversion of 2-phosphoglycerate and 3-phosphoglycerate. The sequence is that of 2,3-bisphosphoglycerate-independent phosphoglycerate mutase from Shewanella sp. (strain MR-7).